Here is a 463-residue protein sequence, read N- to C-terminus: Glycine--tRNA ligase (463 aa).

Residues R98 and E174 each contribute to the substrate site. Residues R206–E208, F216–F221, E290–L291, and G334–R337 contribute to the ATP site. Residue F221 to E225 coordinates substrate. E330–G334 provides a ligand contact to substrate.

The protein belongs to the class-II aminoacyl-tRNA synthetase family. In terms of assembly, homodimer.

It localises to the cytoplasm. It catalyses the reaction tRNA(Gly) + glycine + ATP = glycyl-tRNA(Gly) + AMP + diphosphate. Its function is as follows. Catalyzes the attachment of glycine to tRNA(Gly). This Staphylococcus epidermidis (strain ATCC 35984 / DSM 28319 / BCRC 17069 / CCUG 31568 / BM 3577 / RP62A) protein is Glycine--tRNA ligase.